The primary structure comprises 238 residues: Ribonuclease 3 (238 aa).

The RNase III domain maps to 17–140 (YATLEKALGY…LMAGVYLEAG (124 aa)). Glutamate 53 is a binding site for Mg(2+). Residue aspartate 57 is part of the active site. Positions 126 and 129 each coordinate Mg(2+). Residue glutamate 129 is part of the active site. Residues 167-236 (DYKTALQELT…AYQALQKLKE (70 aa)) form the DRBM domain.

This sequence belongs to the ribonuclease III family. In terms of assembly, homodimer. Mg(2+) is required as a cofactor.

Its subcellular location is the cytoplasm. It carries out the reaction Endonucleolytic cleavage to 5'-phosphomonoester.. In terms of biological role, digests double-stranded RNA. Involved in the processing of primary rRNA transcript to yield the immediate precursors to the large and small rRNAs (23S and 16S). Processes some mRNAs, and tRNAs when they are encoded in the rRNA operon. Processes pre-crRNA and tracrRNA of type II CRISPR loci if present in the organism. In Helicobacter pylori (strain Shi470), this protein is Ribonuclease 3.